The chain runs to 868 residues: Monofunctional pimaradiene synthase (868 aa).

Mg(2+) contacts are provided by Asp620, Asp624, Asn764, Thr768, and Glu772.

The protein belongs to the terpene synthase family. Tpsd subfamily. The cofactor is Mg(2+).

It carries out the reaction (+)-copalyl diphosphate = (-)-pimara-8(14),15-diene + diphosphate. Its pathway is terpene metabolism; oleoresin biosynthesis. In terms of biological role, involved in defensive oleoresin formation in conifers in response to insect attack or other injury. Involved in diterpene (C20) olefins biosynthesis. Monofunctional enzyme lacking the DXDD motif in the class II active site relevant for the cyclization of geranylgeranyl diphosphate (GGPP). Requires (+)-copalyl diphosphate ((+)-CPP) as substrate, but no activity with GGPP or ent-CPP. Pimaradiene is the major products of the enzyme. The sequence is that of Monofunctional pimaradiene synthase from Pinus contorta (Shore pine).